The chain runs to 700 residues: MSRTTSSNTPTLPQAVQERGSLRTLEKGESQFIGSSSGIYFVNTVRRAFINANSRLSSRLLDTAHPTPEECIVADGEDEQQRPDVDASLLPSSFSYGHGIPTGLGRPPQPDVAKQLFMTYFQTWHRFFPFLHGPTILRDMEDLYSSLDENSRASEPIPPRVPTTLPKVVILQCIFNLASLHNSSQLPVASEIQKPTDLLSYLPGLAVKGDLVSIQALFAAGLLLVARMSLRAASVVSGLLSRAVFLAGLHRCPCRYGKLTADECDIRKRLFWCIYVFDRYLSQALGHPLGIQDSDVDVCPLDGPELHHPLLYPTVPSSYSGVASPFSGLSAMSVDATITGRQSEAGLGRATSEDESSQKHNRHSSLSFQVQYSRLLGRALELFHKSLHIRSIDSGSILSLQTDINALWNALPSSLQEFDPSSCDTTDRNQSQVFNESAHFILLHSQLVLLIHRPRLSLEPSTPEFQSAIQICINEAREIIKITSKQINAGYALFWPAYLSVTWMAGIVLAFACQLRLYSAEKGKREIGMCLDVLLHMSERWKLAKNCHAVLSDLAEAIQEMEHTAKRPAFEVSDSTFDSVHSGRDSVSSAMNYQSDSRKRARLDTESNPRSSQRNDGSGQPLNQIPADIVNVSMGEPLGSSFEPLDATDAAIEDDIQYFGDPGRLSSWESGMPDLLAGITWESLLGGINEDDPSWDSAFF.

2 disordered regions span residues 343–364 (SEAG…NRHS) and 577–624 (FDSV…PLNQ). The segment covering 577–595 (FDSVHSGRDSVSSAMNYQS) has biased composition (polar residues). Over residues 596–607 (DSRKRARLDTES) the composition is skewed to basic and acidic residues. The span at 608–623 (NPRSSQRNDGSGQPLN) shows a compositional bias: polar residues.

Its subcellular location is the nucleus. In terms of biological role, probable transcrition factor; part of the gene cluster that mediates the biosynthesis of the mycotoxin fusaproliferin (FUP) that belongs to the class of bicyclic sesterterpenoids. The chain is Probable transcription factor FUP6 from Fusarium proliferatum (strain ET1) (Orchid endophyte fungus).